The primary structure comprises 2320 residues: Sperm-associated antigen 17 (2320 aa).

2 stretches are compositionally biased toward basic and acidic residues: residues 139–171 (DQQRRENEKKMVEERTKSEKDKGKGKSPKEKKV) and 199–210 (RRGEDDEAKSYI). Disordered stretches follow at residues 139-211 (DQQR…SYID), 388-407 (IPEPPPSTAPAPTGKKKAQY), 682-739 (AEQD…SMDQ), 894-928 (SASKIPGPKRSKTNKVSSKTELSDQEKDKEKEKDK), 950-1001 (EERL…AKTL), 1084-1118 (KEKEEKNSEEEEEEEEEKEEVEEKKPKEGEEEKVK), 1191-1221 (QGKGKAKPKGKEKHKDSIKEEELPKEEEKKN), 1334-1367 (SSPDSGPVYTSPELPTSPHNGDLVDSASQPKSET), 1393-1416 (DIIPEVPPPTPVESHIGTWFTTTP), 1983-2028 (KEAS…YENV), and 2080-2101 (TKESVSQRQTENVTRPPTEEPD). Polar residues predominate over residues 703–720 (VTGSTSNSTKPWNSSNRQ). Residues 865–965 (EEAKYQEAKM…EKKAEKKGKD (101 aa)) are a coiled coil. 2 stretches are compositionally biased toward basic and acidic residues: residues 914 to 928 (ELSDQEKDKEKEKDK) and 950 to 999 (EERL…EPAK). The segment covering 1090-1103 (NSEEEEEEEEEKEE) has biased composition (acidic residues). Basic and acidic residues-rich tracts occupy residues 1104–1118 (VEEKKPKEGEEEKVK) and 1203–1221 (KHKDSIKEEELPKEEEKKN). Composition is skewed to polar residues over residues 2012–2028 (VNKSLQTSSSQNQYENV) and 2082–2094 (ESVSQRQTENVTR).

In terms of assembly, interacts (via the C-terminus) with SPAG6; the interaction probably occurs on polymerized microtubules. As to expression, highly expressed in testis, round spermatids, testicular sperm, epididymal sperm and in condensing spermatids (at protein level). Expressed in organs that contain cilia-bearing cells including brain, oviduct, lung, and uterus. Expressed in articular cartilage and bone.

Its subcellular location is the cytoplasm. The protein localises to the cytoskeleton. It is found in the flagellum axoneme. It localises to the cytoplasmic vesicle. The protein resides in the secretory vesicle. Its subcellular location is the acrosome. The protein localises to the golgi apparatus. Component of the central pair apparatus of ciliary axonemes. Plays a critical role in the function and structure of motile cilia. May play a role in endochondral bone formation, most likely because of a function in primary cilia of chondrocytes and osteoblasts. Essential for normal spermatogenesis and male fertility. Required for normal manchette structure, transport of proteins along the manchette microtubules and formation of the sperm head and flagellum. Essential for sperm flagellum development and proper assembly of the respiratory motile cilia central pair apparatus, but not the brain ependymal cilia. This Mus musculus (Mouse) protein is Sperm-associated antigen 17 (Spag17).